The chain runs to 259 residues: UPF0246 protein Aave_1172 (259 aa).

The protein belongs to the UPF0246 family.

This Paracidovorax citrulli (strain AAC00-1) (Acidovorax citrulli) protein is UPF0246 protein Aave_1172.